Reading from the N-terminus, the 341-residue chain is L-threonine 3-dehydrogenase (341 aa).

Residue Cys-38 coordinates Zn(2+). Catalysis depends on charge relay system residues Thr-40 and His-43. His-63, Glu-64, Cys-93, Cys-96, Cys-99, and Cys-107 together coordinate Zn(2+). NAD(+) contacts are provided by residues Ile-175, Asp-195, Arg-200, 262–264 (LGI), and 286–287 (IY).

It belongs to the zinc-containing alcohol dehydrogenase family. As to quaternary structure, homotetramer. Zn(2+) is required as a cofactor.

Its subcellular location is the cytoplasm. The enzyme catalyses L-threonine + NAD(+) = (2S)-2-amino-3-oxobutanoate + NADH + H(+). It functions in the pathway amino-acid degradation; L-threonine degradation via oxydo-reductase pathway; glycine from L-threonine: step 1/2. Catalyzes the NAD(+)-dependent oxidation of L-threonine to 2-amino-3-ketobutyrate. The chain is L-threonine 3-dehydrogenase from Shewanella sp. (strain ANA-3).